A 274-amino-acid polypeptide reads, in one-letter code: Large ribosomal subunit protein uL2cz/uL2cy (274 aa).

Disordered regions lie at residues 1–21 (MAIHLYKTSTPSTRNGAVDSQ) and 224–274 (NPVD…RRSK).

This sequence belongs to the universal ribosomal protein uL2 family. As to quaternary structure, part of the 50S ribosomal subunit.

It is found in the plastid. Its subcellular location is the chloroplast. The protein is Large ribosomal subunit protein uL2cz/uL2cy (rpl2-A) of Populus trichocarpa (Western balsam poplar).